A 221-amino-acid chain; its full sequence is Ribonuclease T (221 aa).

In terms of domain architecture, Exonuclease spans 20–194 (VVIDIETAGF…YDTLQTANLF (175 aa)). Mg(2+)-binding residues include D23, E25, H181, and D186. H181 (proton donor/acceptor) is an active-site residue.

The protein belongs to the RNase T family. In terms of assembly, homodimer. The cofactor is Mg(2+).

In terms of biological role, trims short 3' overhangs of a variety of RNA species, leaving a one or two nucleotide 3' overhang. Responsible for the end-turnover of tRNA: specifically removes the terminal AMP residue from uncharged tRNA (tRNA-C-C-A). Also appears to be involved in tRNA biosynthesis. This Buchnera aphidicola subsp. Acyrthosiphon pisum (strain APS) (Acyrthosiphon pisum symbiotic bacterium) protein is Ribonuclease T.